A 406-amino-acid chain; its full sequence is CCA-adding enzyme (406 aa).

2 residues coordinate ATP: G32 and R35. Residues G32 and R35 each contribute to the CTP site. Mg(2+)-binding residues include D45 and D47. Positions 116, 159, 162, 165, and 168 each coordinate ATP. CTP contacts are provided by R116, D159, R162, R165, and R168.

This sequence belongs to the tRNA nucleotidyltransferase/poly(A) polymerase family. Bacterial CCA-adding enzyme type 3 subfamily. In terms of assembly, homodimer. Requires Mg(2+) as cofactor.

It catalyses the reaction a tRNA precursor + 2 CTP + ATP = a tRNA with a 3' CCA end + 3 diphosphate. It carries out the reaction a tRNA with a 3' CCA end + 2 CTP + ATP = a tRNA with a 3' CCACCA end + 3 diphosphate. Functionally, catalyzes the addition and repair of the essential 3'-terminal CCA sequence in tRNAs without using a nucleic acid template. Adds these three nucleotides in the order of C, C, and A to the tRNA nucleotide-73, using CTP and ATP as substrates and producing inorganic pyrophosphate. tRNA 3'-terminal CCA addition is required both for tRNA processing and repair. Also involved in tRNA surveillance by mediating tandem CCA addition to generate a CCACCA at the 3' terminus of unstable tRNAs. While stable tRNAs receive only 3'-terminal CCA, unstable tRNAs are marked with CCACCA and rapidly degraded. The chain is CCA-adding enzyme from Enterococcus faecalis (strain ATCC 700802 / V583).